The following is a 624-amino-acid chain: Bifunctional protein ArgH (624 aa).

Residues 1–466 (MALWGGRFTQ…AARDTTLVKV (466 aa)) are argininosuccinate lyase. One can recognise an N-acetyltransferase domain in the interval 464 to 614 (VKVRPARITD…DEVALEFNLS (151 aa)). Positions 467-624 (RPARITDIET…EQIISQVKVA (158 aa)) are probable acetyltransferase.

This sequence in the N-terminal section; belongs to the lyase 1 family. Argininosuccinate lyase subfamily.

It localises to the cytoplasm. It carries out the reaction 2-(N(omega)-L-arginino)succinate = fumarate + L-arginine. Its pathway is amino-acid biosynthesis; L-arginine biosynthesis; L-arginine from L-ornithine and carbamoyl phosphate: step 3/3. The chain is Bifunctional protein ArgH (argH) from Vibrio vulnificus (strain CMCP6).